We begin with the raw amino-acid sequence, 261 residues long: Probable 6-phosphogluconolactonase 4 (261 aa).

It belongs to the glucosamine/galactosamine-6-phosphate isomerase family. 6-phosphogluconolactonase subfamily.

It localises to the cytoplasm. The protein resides in the cytosol. The catalysed reaction is 6-phospho-D-glucono-1,5-lactone + H2O = 6-phospho-D-gluconate + H(+). It functions in the pathway carbohydrate degradation; pentose phosphate pathway; D-ribulose 5-phosphate from D-glucose 6-phosphate (oxidative stage): step 2/3. Its function is as follows. Catalyzes the hydrolysis of 6-phosphogluconolactone to 6-phosphogluconate. This is Probable 6-phosphogluconolactonase 4 from Arabidopsis thaliana (Mouse-ear cress).